Consider the following 416-residue polypeptide: Gamma-glutamyl phosphate reductase (416 aa).

Belongs to the gamma-glutamyl phosphate reductase family.

Its subcellular location is the cytoplasm. The catalysed reaction is L-glutamate 5-semialdehyde + phosphate + NADP(+) = L-glutamyl 5-phosphate + NADPH + H(+). It participates in amino-acid biosynthesis; L-proline biosynthesis; L-glutamate 5-semialdehyde from L-glutamate: step 2/2. Functionally, catalyzes the NADPH-dependent reduction of L-glutamate 5-phosphate into L-glutamate 5-semialdehyde and phosphate. The product spontaneously undergoes cyclization to form 1-pyrroline-5-carboxylate. The chain is Gamma-glutamyl phosphate reductase from Vibrio atlanticus (strain LGP32) (Vibrio splendidus (strain Mel32)).